A 239-amino-acid chain; its full sequence is Terpene cyclase idtB (239 aa).

The next 5 membrane-spanning stretches (helical) occupy residues 20 to 40 (MADT…ALMI), 50 to 70 (CMAL…TIVY), 75 to 95 (RVEL…MVGA), 113 to 133 (AGFI…ALAM), and 138 to 158 (GLAY…GGLF). An N-linked (GlcNAc...) asparagine glycan is attached at N164. A helical transmembrane segment spans residues 197-217 (EVFGWLASPLVLWSLVTFLLA).

This sequence belongs to the paxB family.

Its subcellular location is the membrane. The protein operates within secondary metabolite biosynthesis. Functionally, terpene cyclase; part of the gene cluster that mediates the biosynthesis of paspalitrems, indole-diterpene (IDT) mycotoxins that are potent tremorgens in mammals. The geranylgeranyl diphosphate (GGPP) synthase idtG is proposed to catalyze the first step in IDT biosynthesis via catalysis of a series of iterative condensations of isopentenyl diphosphate (IPP) with dimethylallyl diphosphate (DMAPP), geranyl diphosphate (GPP), and farnesyl diphosphate (FPP), to form GGPP. Condensation of indole-3-glycerol phosphate with GGPP by the prenyltransferase idtC then forms 3-geranylgeranylindole (3-GGI). Epoxidation of the two terminal alkenes of the geranylgeranyl moiety by the FAD-dependent monooxygenase idtM, and cyclization by the terpene cyclase idtB then leads to the production of paspaline. The cytochrome P450 monooxygenase idtP then catalyzes oxidative elimination of the pendant methyl group at C-12 of paspaline and generates the C-10 ketone to yield 13-desoxypaxilline. The cytochrome P450 monooxygenase idtQ may catalyze the C-13 oxidation of 13-desoxypaxilline to afford paxilline. Considering that both paspalicine and paxilline were detected in C.paspali, idtQ also catalyzes the formation of paspalinine from 13-desoxypaxilline via paspalicine as an intermediate. Finally, the alpha-prenyltransferase idtF prenylates paspalinine at the C-20 or the C-21 positions to yield paspalitrems A and C, respectively. The hydroxylation of paspalitrem A at C-32 by a still unknown oxidase affords paspalitrem B. This Claviceps paspali (Rye ergot fungus) protein is Terpene cyclase idtB.